The chain runs to 71 residues: Protein CYSTEINE-RICH TRANSMEMBRANE MODULE 6 (71 aa).

Positions 1 to 12 (MSQYSQNQSSGA) are enriched in polar residues. A disordered region spans residues 1 to 36 (MSQYSQNQSSGAYPTPPVSTGPYVAPPPLGYPTNDT). Positions 14 to 30 (PTPPVSTGPYVAPPPLG) are enriched in pro residues. Residues 48-64 (SKGDGFLKGCLAAMCCC) form a helical membrane-spanning segment.

Belongs to the CYSTM1 family. In terms of assembly, homodimer and heterodimers. Interacts with CYSTM7 and WIH1/CYSTM13. As to expression, mostly expressed in roots, stems, rosette leaves and siliques and, to a lower extent, in flowers and cauline leaves.

It is found in the cell membrane. The protein localises to the cytoplasm. In terms of biological role, involved in resistance to abiotic stress. The chain is Protein CYSTEINE-RICH TRANSMEMBRANE MODULE 6 from Arabidopsis thaliana (Mouse-ear cress).